A 167-amino-acid chain; its full sequence is Glutathione peroxidase 1 (167 aa).

Cys-41 is an active-site residue.

Belongs to the glutathione peroxidase family.

It catalyses the reaction 2 glutathione + H2O2 = glutathione disulfide + 2 H2O. Its function is as follows. May constitute a glutathione peroxidase-like protective system against oxidative stresses. This Helianthus annuus (Common sunflower) protein is Glutathione peroxidase 1 (GPXHA-1).